The following is a 552-amino-acid chain: Membrane protein insertase YidC (552 aa).

A run of 5 helical transmembrane segments spans residues 7 to 24 (VLWV…DNWQ), 364 to 384 (WGWA…PLSA), 434 to 454 (LPVV…LASV), 473 to 493 (PFFI…SLNP), and 508 to 528 (PIAF…YYVV).

Belongs to the OXA1/ALB3/YidC family. Type 1 subfamily. Interacts with the Sec translocase complex via SecD. Specifically interacts with transmembrane segments of nascent integral membrane proteins during membrane integration.

It localises to the cell inner membrane. Functionally, required for the insertion and/or proper folding and/or complex formation of integral membrane proteins into the membrane. Involved in integration of membrane proteins that insert both dependently and independently of the Sec translocase complex, as well as at least some lipoproteins. Aids folding of multispanning membrane proteins. The chain is Membrane protein insertase YidC from Burkholderia cenocepacia (strain HI2424).